We begin with the raw amino-acid sequence, 151 residues long: HTH-type transcriptional regulator TcaR (151 aa).

The region spanning 1 to 142 (MVKHLQDHIQ…VRQVLEVINH (142 aa)) is the HTH marR-type domain. The segment at residues 54 to 77 (ISEITQRQGVNKAAVSRRIKKLID) is a DNA-binding region (H-T-H motif).

Involved in the antibiotic teicoplanin susceptibility. Inactivation of the tcaRAB operon leads to teicoplanin resistance. Its function is as follows. Is a weak negative regulator of transcription of the icaABD operon. The polypeptide is HTH-type transcriptional regulator TcaR (tcaR) (Staphylococcus aureus (strain COL)).